The chain runs to 247 residues: Ras-like protein family member 11B (247 aa).

Residues 28–245 (AGRRLVKIAV…ALSAKVRTVT (218 aa)) form a small GTPase-like region. GTP-binding positions include 39 to 46 (GASGVGKT), 86 to 93 (DTPGIQVH), and 151 to 154 (NKAD). Positions 202–228 (PKQQPSSTPEKRRTSLIPRPKSPNMQD) are disordered.

Belongs to the small GTPase superfamily. Ras family.

It catalyses the reaction GTP + H2O = GDP + phosphate + H(+). The protein is Ras-like protein family member 11B of Mus musculus (Mouse).